A 438-amino-acid polypeptide reads, in one-letter code: Cell division cycle-associated 7-like protein (438 aa).

Positions 9 to 33 (IPKEVADIFSAPSDDEEFVGFQDDV) match the Integrase domain-binding motif 1 (IBM1) motif. Ser21 bears the Phosphoserine mark. The segment at 56-115 (VCFRSKYFTEELRRIFKEDTDSEMEDFEGFTESELNMSSNPELMESELSDSDKAYPVMND) is PSIP1-binding. Positions 63–89 (FTEELRRIFKEDTDSEMEDFEGFTESE) match the Integrase domain-binding motif 2 (IBM2) motif. The interval 74-199 (DTDSEMEDFE…ESRAESQENS (126 aa)) is disordered. Thr75 is subject to Phosphothreonine. Residues 75-86 (TDSEMEDFEGFT) show a composition bias toward acidic residues. Ser77 carries the post-translational modification Phosphoserine. Thr86 carries the phosphothreonine modification. Ser101, Ser104, Ser135, Ser136, and Ser159 each carry phosphoserine. Over residues 152–167 (RTPDKDSSHLLDSKTD) the composition is skewed to basic and acidic residues. The segment covering 168-177 (LRRKKSSRQP) has biased composition (basic residues). Phosphoserine occurs at positions 183 and 185. Positions 201–223 (ALLKRAMNIKENKAMLAQLLAEL) are MYC-binding. Glycyl lysine isopeptide (Lys-Gly) (interchain with G-Cter in SUMO2) cross-links involve residues Lys210 and Lys213. Ser249 carries the post-translational modification Phosphoserine.

As to quaternary structure, interacts with MYC. Interacts (via IBM motifs) with PSIP1 (via IBD domain); phosphorylation increases its affinity for PSIP1. In terms of processing, phosphorylation increases its interaction with PSIP1. As to expression, expressed in all tissues but not detected in total brain.

Its subcellular location is the cytoplasm. It localises to the nucleus. Functionally, plays a role in transcriptional regulation as a repressor that inhibits monoamine oxidase A (MAOA) activity and gene expression by binding to the promoter. Plays an important oncogenic role in mediating the full transforming effect of MYC in medulloblastoma cells. Involved in apoptotic signaling pathways; May act downstream of P38-kinase and BCL-2, but upstream of CASP3/caspase-3 as well as CCND1/cyclin D1 and E2F1. The polypeptide is Cell division cycle-associated 7-like protein (Cdca7l) (Mus musculus (Mouse)).